A 478-amino-acid polypeptide reads, in one-letter code: GDP-fucose protein O-fucosyltransferase 3 (478 aa).

Over 1–9 (MVRIQRGKL) the chain is Cytoplasmic. The chain crosses the membrane as a helical; Signal-anchor for type II membrane protein span at residues 10–30 (LAFCLCVMATVFLLITLQVVV). Residues 31–478 (ELGKFEGKKF…QEFWALVFKD (448 aa)) are Lumenal-facing. N-linked (GlcNAc...) asparagine glycans are attached at residues asparagine 110 and asparagine 168. Cysteine 389 and cysteine 392 are oxidised to a cystine.

It belongs to the glycosyltransferase 10 family.

The protein localises to the endoplasmic reticulum membrane. The enzyme catalyses L-threonyl-[protein] + GDP-beta-L-fucose = 3-O-(alpha-L-fucosyl)-L-threonyl-[protein] + GDP + H(+). It carries out the reaction L-seryl-[protein] + GDP-beta-L-fucose = 3-O-(alpha-L-fucosyl)-L-seryl-[protein] + GDP + H(+). It participates in protein modification; protein glycosylation. In terms of biological role, protein O-fucosyltransferase that specifically catalyzes O-fucosylation of serine or threonine residues in EMI domains of target proteins, such as MMRN1, MMRN2 and EMID1. Attaches fucose through an O-glycosidic linkage. O-fucosylation of EMI domain-containing proteins may be required for facilitating protein folding and secretion. May also show alpha-(1,3)-fucosyltransferase activity toward the innermost N-acetyl glucosamine (GlcNAc) residue in biantennary N-glycan acceptors. However, this was tested with a library of synthetic substrates and this activity is unsure in vivo. May be involved in biosynthesis of Lewis X-carrying biantennary N-glycans that regulate neuron stem cell self-renewal during brain development. The protein is GDP-fucose protein O-fucosyltransferase 3 (FUT10) of Bos taurus (Bovine).